The following is a 215-amino-acid chain: Large ribosomal subunit protein uL3 (215 aa).

Gln151 is modified (N5-methylglutamine).

It belongs to the universal ribosomal protein uL3 family. As to quaternary structure, part of the 50S ribosomal subunit. Forms a cluster with proteins L14 and L19. In terms of processing, methylated by PrmB.

One of the primary rRNA binding proteins, it binds directly near the 3'-end of the 23S rRNA, where it nucleates assembly of the 50S subunit. The polypeptide is Large ribosomal subunit protein uL3 (Rickettsia bellii (strain OSU 85-389)).